Here is a 229-residue protein sequence, read N- to C-terminus: MIKQLFWRGLLLALVLVVLYQFWIFMHILWWVEHNPSSSAFMRASLSALQQDNPDAALKHQWVEYQRISIHLKRAVIAAEDAKFVGHEGFDWDGIQKAYEKNWKQGKIVAGGSTISQQLAKNLFLSTKRTPWRKLEEAVITWMLERMMSKRRIFEIYLNVIEWGNGVFGAEAAARHYYRTSASSLNVAQAARLAAMIPNPRYYDKHREARGLIRKARIIEARMRYAEVP.

Residues 10 to 30 form a helical membrane-spanning segment; sequence LLLALVLVVLYQFWIFMHILW.

The protein belongs to the glycosyltransferase 51 family.

It is found in the cell inner membrane. The enzyme catalyses [GlcNAc-(1-&gt;4)-Mur2Ac(oyl-L-Ala-gamma-D-Glu-L-Lys-D-Ala-D-Ala)](n)-di-trans,octa-cis-undecaprenyl diphosphate + beta-D-GlcNAc-(1-&gt;4)-Mur2Ac(oyl-L-Ala-gamma-D-Glu-L-Lys-D-Ala-D-Ala)-di-trans,octa-cis-undecaprenyl diphosphate = [GlcNAc-(1-&gt;4)-Mur2Ac(oyl-L-Ala-gamma-D-Glu-L-Lys-D-Ala-D-Ala)](n+1)-di-trans,octa-cis-undecaprenyl diphosphate + di-trans,octa-cis-undecaprenyl diphosphate + H(+). The protein operates within cell wall biogenesis; peptidoglycan biosynthesis. Its function is as follows. Peptidoglycan polymerase that catalyzes glycan chain elongation from lipid-linked precursors. In Methylobacillus flagellatus (strain ATCC 51484 / DSM 6875 / VKM B-1610 / KT), this protein is Biosynthetic peptidoglycan transglycosylase.